A 201-amino-acid chain; its full sequence is MAGPQRRGSGAGGGERRDRKGRDGGAGAAEKTAYVERVVAINRVAKVVKGGRRFSFTALVVVGDGDGTVGVGYGKAKEVPAAIAKGVEEAKKHFFKVPRIQGTIPHPIQGEKAAGVVLLKPASPGTGVIAGGPVRAVLECAGIHDVLSKSLGSDNQINIVHATVEALKGLQRPEEIAARRGLPLEDVAPAALLRARAGAGA.

A disordered region spans residues 1–28 (MAGPQRRGSGAGGGERRDRKGRDGGAGA). The span at 14–23 (GERRDRKGRD) shows a compositional bias: basic and acidic residues. The 64-residue stretch at 34–97 (YVERVVAINR…EEAKKHFFKV (64 aa)) folds into the S5 DRBM domain.

It belongs to the universal ribosomal protein uS5 family. In terms of assembly, part of the 30S ribosomal subunit. Contacts proteins S4 and S8.

Its function is as follows. With S4 and S12 plays an important role in translational accuracy. Functionally, located at the back of the 30S subunit body where it stabilizes the conformation of the head with respect to the body. This is Small ribosomal subunit protein uS5 from Streptomyces coelicolor (strain ATCC BAA-471 / A3(2) / M145).